The sequence spans 367 residues: Glutamate 5-kinase (367 aa).

Lysine 10 contacts ATP. Residues serine 50, aspartate 137, and asparagine 149 each coordinate substrate. Residues 169 to 170 (TD) and 211 to 217 (TGGMSTK) contribute to the ATP site. The region spanning 275-353 (AGEITVDDGA…QQIAEILGYE (79 aa)) is the PUA domain.

It belongs to the glutamate 5-kinase family.

It localises to the cytoplasm. The enzyme catalyses L-glutamate + ATP = L-glutamyl 5-phosphate + ADP. It functions in the pathway amino-acid biosynthesis; L-proline biosynthesis; L-glutamate 5-semialdehyde from L-glutamate: step 1/2. Functionally, catalyzes the transfer of a phosphate group to glutamate to form L-glutamate 5-phosphate. The sequence is that of Glutamate 5-kinase from Pectobacterium carotovorum subsp. carotovorum (strain PC1).